Consider the following 181-residue polypeptide: D-lyxose/D-mannose isomerase (181 aa).

The Mn(2+) site is built by His-75, His-77, Glu-88, and His-143.

This sequence belongs to the D-lyxose ketol-isomerase family. In terms of assembly, homodimer. It depends on Mn(2+) as a cofactor.

It catalyses the reaction D-lyxose = D-xylulose. The catalysed reaction is D-mannose = D-fructose. Sugar isomerase that catalyzes the reversible isomerization of D-lyxose to D-xylulose, and D-mannose to D-fructose. Shows optimum activity using D-lyxose as substrate, but can also effectively catalyze the isomerization between D-fructose and D-mannose. This Thermosediminibacter oceani (strain ATCC BAA-1034 / DSM 16646 / JW/IW-1228P) protein is D-lyxose/D-mannose isomerase.